Consider the following 110-residue polypeptide: MESVSIPVLVAGLIDCVAQLIRIAEDLLQFISQEQVPSVQQNARAEEAEAAAPPAEEDSLPDLADLSDLESILSVREDDDLILDTDETMIDINEIYKDILPAIKDDTESE.

A disordered region spans residues 38–62 (SVQQNARAEEAEAAAPPAEEDSLPD).

This is an uncharacterized protein from Mus musculus (Mouse).